A 437-amino-acid polypeptide reads, in one-letter code: Chromosomal replication initiator protein DnaA (437 aa).

A domain I, interacts with DnaA modulators region spans residues 1–82 (MIFPIWKKCL…KIIINIEKKK (82 aa)). Residues 82–101 (KLEKKKCIYKKKNIQIYLHS) are domain II. The tract at residues 102 to 318 (EINKKYQFHN…GILKKIQILS (217 aa)) is domain III, AAA+ region. Residues G146, G148, K149, and T150 each coordinate ATP. A domain IV, binds dsDNA region spans residues 319 to 437 (ILNKEKITIN…FIYLFNQLNA (119 aa)).

This sequence belongs to the DnaA family. In terms of assembly, oligomerizes as a right-handed, spiral filament on DNA at oriC.

The protein resides in the cytoplasm. Functionally, plays an essential role in the initiation and regulation of chromosomal replication. ATP-DnaA binds to the origin of replication (oriC) to initiate formation of the DNA replication initiation complex once per cell cycle. Binds the DnaA box (a 9 base pair repeat at the origin) and separates the double-stranded (ds)DNA. Forms a right-handed helical filament on oriC DNA; dsDNA binds to the exterior of the filament while single-stranded (ss)DNA is stabiized in the filament's interior. The ATP-DnaA-oriC complex binds and stabilizes one strand of the AT-rich DNA unwinding element (DUE), permitting loading of DNA polymerase. After initiation quickly degrades to an ADP-DnaA complex that is not apt for DNA replication. Binds acidic phospholipids. This is Chromosomal replication initiator protein DnaA from Buchnera aphidicola subsp. Cinara cedri (strain Cc).